Here is a 93-residue protein sequence, read N- to C-terminus: Small ribosomal subunit protein uS19 (93 aa).

This sequence belongs to the universal ribosomal protein uS19 family.

In terms of biological role, protein S19 forms a complex with S13 that binds strongly to the 16S ribosomal RNA. The polypeptide is Small ribosomal subunit protein uS19 (Thermoanaerobacter pseudethanolicus (strain ATCC 33223 / 39E) (Clostridium thermohydrosulfuricum)).